Here is a 341-residue protein sequence, read N- to C-terminus: GDT1-like protein 1, chloroplastic (341 aa).

Positions 1 to 13 (MASVASSTVFASS) are enriched in low complexity. Disordered regions lie at residues 1-41 (MASV…GRSV) and 54-76 (VVTR…GGGR). The N-terminal 57 residues, 1–57 (MASVASSTVFASSLPHHRATTRAPPTPPRIPRRARLPGRSVVSCLPKRGSEKLVVTR), are a transit peptide targeting the chloroplast. The next 7 helical transmembrane spans lie at 79-99 (PSLD…VLML), 117-137 (VVGD…LIFF), 158-178 (AIIF…SVVL), 203-223 (FLAA…AASG), 246-266 (GAGI…VFIA), 286-306 (LGVI…AVLG), and 318-338 (IVAY…LVEI).

Belongs to the GDT1 family.

It is found in the plastid. It localises to the chloroplast membrane. This Oryza sativa subsp. japonica (Rice) protein is GDT1-like protein 1, chloroplastic.